The chain runs to 444 residues: Killer cell immunoglobulin-like receptor 3DL1 (444 aa).

Positions 1–21 (MSLMVVSMACVGLFLVQRAGP) are cleaved as a signal peptide. Residues 22–340 (HMGGQDKPFL…SKSGNPRHLH (319 aa)) are Extracellular-facing. Ig-like C2-type domains are found at residues 42–102 (GGHV…HPHS), 137–202 (GERV…VTHT), and 237–300 (GESV…FRHS). Intrachain disulfides connect cysteine 49/cysteine 95, cysteine 144/cysteine 195, and cysteine 244/cysteine 293. Asparagine 92, asparagine 179, and asparagine 273 each carry an N-linked (GlcNAc...) asparagine glycan. The tract at residues 315–334 (VTGNPSSSWPSPTEPSSKSG) is disordered. Positions 319 to 333 (PSSSWPSPTEPSSKS) are enriched in low complexity. The helical transmembrane segment at 341–360 (ILIGTSVVIILFILLLFFLL) threads the bilayer. Over 361–444 (HLWCSNKKNA…KPRSKVVSCP (84 aa)) the chain is Cytoplasmic. Disordered stretches follow at residues 375 to 394 (QEPA…QDPE) and 409 to 444 (RKIT…VSCP).

Belongs to the immunoglobulin superfamily.

The protein localises to the cell membrane. Receptor on natural killer (NK) cells for HLA Bw4 allele. Inhibits the activity of NK cells thus preventing cell lysis. The polypeptide is Killer cell immunoglobulin-like receptor 3DL1 (Homo sapiens (Human)).